We begin with the raw amino-acid sequence, 231 residues long: uncharacterized protein (231 aa).

Residues 3–119 (RADFCIIGLG…RTMGIREALI (117 aa)) form the RCK N-terminal domain. An RCK C-terminal domain is found at 134–221 (HGMETEIINL…VNQYLRYINP (88 aa)).

This is an uncharacterized protein from Mycoplasma pneumoniae (strain ATCC 29342 / M129 / Subtype 1) (Mycoplasmoides pneumoniae).